The sequence spans 110 residues: QKCATIVMVTNLLEAKKLKCHQYWPGEDTNEGETEKYGYFLVTLTDVKTRNFFVTRTFNFNNSTTLPSIIRQLHYTAWPDFGVPKNPHELLLFRRRVIAANPPHSGPIVV.

One can recognise a Tyrosine-protein phosphatase domain in the interval 1 to 110 (QKCATIVMVT…NPPHSGPIVV (110 aa)). Residue Asp-80 coordinates substrate.

The protein belongs to the protein-tyrosine phosphatase family.

It carries out the reaction O-phospho-L-tyrosyl-[protein] + H2O = L-tyrosyl-[protein] + phosphate. This chain is Tyrosine-protein phosphatase 3 (STY-3), found in Styela plicata (Wrinkled sea squirt).